Consider the following 122-residue polypeptide: Large ribosomal subunit protein uL14 (122 aa).

The protein belongs to the universal ribosomal protein uL14 family. In terms of assembly, part of the 50S ribosomal subunit. Forms a cluster with proteins L3 and L19. In the 70S ribosome, L14 and L19 interact and together make contacts with the 16S rRNA in bridges B5 and B8.

Its function is as follows. Binds to 23S rRNA. Forms part of two intersubunit bridges in the 70S ribosome. The sequence is that of Large ribosomal subunit protein uL14 from Burkholderia vietnamiensis (strain G4 / LMG 22486) (Burkholderia cepacia (strain R1808)).